The primary structure comprises 214 residues: Dephospho-CoA kinase (214 aa).

Residues 20–214 (RIGITGGIAS…KLQLKKLYKF (195 aa)) form the DPCK domain. Residue 28–33 (ASGKTI) coordinates ATP.

The protein belongs to the CoaE family.

The protein localises to the cytoplasm. The enzyme catalyses 3'-dephospho-CoA + ATP = ADP + CoA + H(+). Its pathway is cofactor biosynthesis; coenzyme A biosynthesis; CoA from (R)-pantothenate: step 5/5. Catalyzes the phosphorylation of the 3'-hydroxyl group of dephosphocoenzyme A to form coenzyme A. This chain is Dephospho-CoA kinase, found in Prochlorococcus marinus (strain NATL2A).